A 377-amino-acid polypeptide reads, in one-letter code: L-arabinitol 4-dehydrogenase (377 aa).

The Zn(2+) site is built by Cys66, His91, Glu92, Cys121, Cys124, Cys127, Cys135, and Glu176. Residues 203 to 204 (PI), Asp224, Arg229, Ile296, and 320 to 322 (QYR) contribute to the NAD(+) site.

Belongs to the zinc-containing alcohol dehydrogenase family. As to quaternary structure, homotetramer. Requires Zn(2+) as cofactor. The N-terminus is blocked.

The catalysed reaction is L-arabinitol + NAD(+) = L-xylulose + NADH + H(+). Its pathway is carbohydrate degradation; L-arabinose degradation via L-arabinitol; D-xylulose 5-phosphate from L-arabinose (fungal route): step 2/5. Catalyzes the NAD-dependent oxidation of L-arabinitol to L-xylulose in the fungal L-arabinose catabolic pathway. L-arabinose catabolism is important for using plant material as a carbon source. Can partially compensate for xylitol dehydrogenase in xdh1 mutants. Also oxidizes galactitol to L-xylo-3-hexulose as an alternative to the standard Leloir pathway for D-galactose metabolism. NADP cannot act as a cosubstrate. In Hypocrea jecorina (Trichoderma reesei), this protein is L-arabinitol 4-dehydrogenase (lad1).